Here is a 512-residue protein sequence, read N- to C-terminus: Cytochrome P450 4d1 (512 aa).

Heme is bound by residues E316 and C456.

Belongs to the cytochrome P450 family. Heme is required as a cofactor.

The protein resides in the endoplasmic reticulum membrane. It is found in the microsome membrane. In terms of biological role, involved in the metabolism of insect hormones and in the breakdown of synthetic insecticides. The protein is Cytochrome P450 4d1 (Cyp4d1) of Drosophila melanogaster (Fruit fly).